The following is a 695-amino-acid chain: Elongation factor G (695 aa).

The tr-type G domain occupies 10 to 289; that stretch reads KNLRNIGIMA…AVVAWMPSPL (280 aa). GTP contacts are provided by residues 19–26, 83–87, and 137–140; these read AHIDAGKT, DTPGH, and NKMD.

Belongs to the TRAFAC class translation factor GTPase superfamily. Classic translation factor GTPase family. EF-G/EF-2 subfamily.

It is found in the cytoplasm. Functionally, catalyzes the GTP-dependent ribosomal translocation step during translation elongation. During this step, the ribosome changes from the pre-translocational (PRE) to the post-translocational (POST) state as the newly formed A-site-bound peptidyl-tRNA and P-site-bound deacylated tRNA move to the P and E sites, respectively. Catalyzes the coordinated movement of the two tRNA molecules, the mRNA and conformational changes in the ribosome. This Protochlamydia amoebophila (strain UWE25) protein is Elongation factor G.